The sequence spans 147 residues: Prefoldin subunit alpha (147 aa).

This sequence belongs to the prefoldin alpha subunit family. Heterohexamer of two alpha and four beta subunits.

It is found in the cytoplasm. Functionally, molecular chaperone capable of stabilizing a range of proteins. Seems to fulfill an ATP-independent, HSP70-like function in archaeal de novo protein folding. This chain is Prefoldin subunit alpha, found in Methanocorpusculum labreanum (strain ATCC 43576 / DSM 4855 / Z).